Reading from the N-terminus, the 172-residue chain is Bcl-2-related protein A1 (172 aa).

A BH1 motif is present at residues 77-97 (KEFEDGIINWGRIVTIFAFGG). A BH2 motif is present at residues 132–147 (EWIRQNGGWEDGFIKK).

Belongs to the Bcl-2 family. Interacts directly with BCL2L11/BIM and PMAIP1. Interacts directly with BAK1, BID, BMF and BBC3. Interacts with BOP. Interacts with isoform 3, isoform 4 and isoform 5 of ING4. Interacts with UBQLN4. As to expression, expressed in hemopoietic tissues, including bone marrow, spleen and thymus.

Its subcellular location is the cytoplasm. Functionally, retards apoptosis induced by IL-3 deprivation. May function in the response of hemopoietic cells to external signals and in maintaining endothelial survival during infection. Can inhibit apoptosis induced by serum starvation in the mammary epithelial cell line HC11. The chain is Bcl-2-related protein A1 (Bcl2a1) from Mus musculus (Mouse).